The sequence spans 210 residues: Prolactin-2 (210 aa).

The signal sequence occupies residues 1-23 (MARRSQGTKLHLAVLCLVVSCHA). Cystine bridges form between C69/C183 and C200/C210.

Belongs to the somatotropin/prolactin family.

It localises to the secreted. The chain is Prolactin-2 (prl2) from Oncorhynchus keta (Chum salmon).